The chain runs to 236 residues: MEKRDELYRGKAKSVYKTDDADRLILLFRNDTSAFDGKRIEQLDRKGMVNNKFNAFIMQKLEEAGVPTQFDKLLGDNECLVKKLDMIPVECVVRNYAAGSLVKRLGVEEGIKLEPSTFELFLKNDEKGDPFINESHVVAFGWGTAEQLVEMKKLSLKVNEVLSKLFDDAGLLLVDFKLEFGVFHGQIVLGDEFSPDGCRLWDKETRKKMDKDRFRQGLGDVIEAYEEVAKRLGVPL.

Belongs to the SAICAR synthetase family.

The enzyme catalyses 5-amino-1-(5-phospho-D-ribosyl)imidazole-4-carboxylate + L-aspartate + ATP = (2S)-2-[5-amino-1-(5-phospho-beta-D-ribosyl)imidazole-4-carboxamido]succinate + ADP + phosphate + 2 H(+). It participates in purine metabolism; IMP biosynthesis via de novo pathway; 5-amino-1-(5-phospho-D-ribosyl)imidazole-4-carboxamide from 5-amino-1-(5-phospho-D-ribosyl)imidazole-4-carboxylate: step 1/2. The protein is Phosphoribosylaminoimidazole-succinocarboxamide synthase of Pseudomonas entomophila (strain L48).